A 79-amino-acid polypeptide reads, in one-letter code: Gas vesicle protein A2 (79 aa).

The tract at residues 9 to 19 (LAEVLDRVLDK) is alpha helix 1. A beta-strand 1 region spans residues 23–31 (VDVWARISL). A beta turn region spans residues 32–34 (VGI). The tract at residues 35–43 (EILTVEARV) is beta-strand 2. Positions 48–67 (VDTFLHYAEEIAKIEQAELT) are alpha helix 2.

The protein belongs to the gas vesicle GvpA family. In terms of assembly, the gas vesicle shell is 2 nm thick and consists of a single layer of this protein. It forms helical ribs nearly perpendicular to the long axis of the vesicle.

The protein resides in the gas vesicle shell. Gas vesicles are hollow, gas filled proteinaceous nanostructures found in several microbial planktonic microorganisms. They allow positioning of halobacteria at the optimal depth for growth in the poorly aerated shallow brine pools of their habitat. GvpA forms the gas vesicle shell. This protein can replace the p-gvpA gene in the p-vac locus and increases the critical collapse pressure (CCP) of hybrid gas vesicles from 0.66 MPa to 0.90 MPa. In stationary phase gas vesicles about 30 times more GvpA1 is found than GvpA2. Functionally, expression of 2 c-vac DNA fragments containing 2 divergently transcribed regions (gvpE-gvpF-gvpG-gvpH-gvpI-gvpJ-gvpK-gvpL-gvpM and gvpA-gvpC-gvpN-gvpO) allows H.volcanii to produce gas vesicles. All site-directed mutagenesis is tested in H.volcanii. This is Gas vesicle protein A2 from Halobacterium salinarum (strain ATCC 700922 / JCM 11081 / NRC-1) (Halobacterium halobium).